A 156-amino-acid polypeptide reads, in one-letter code: MKIIFFFALLAIAACSASAQFDAVTQVYRQYQLQPHLMLQQQMLSPCGEFVRQQCSTVATPFFQSPVFQLRNCQVMQQQCCQQLRMIAQQSHCQAISSVQAIVQQLRLQQFASVYFDQSQAQAQAMLALNMPSICGIYPSYNTAPCSIPTVGGIWY.

An N-terminal signal peptide occupies residues 1 to 19 (MKIIFFFALLAIAACSASA). Pyrrolidone carboxylic acid is present on Gln-20.

Belongs to the prolamin family.

It localises to the vacuole. It is found in the aleurone grain. Functionally, seed storage protein; serves as a source of nitrogen, carbon and sulfur for the young developing seedling. In Oryza sativa subsp. japonica (Rice), this protein is Prolamin PPROL 17D.